A 488-amino-acid chain; its full sequence is Probable cytosol aminopeptidase (488 aa).

Mn(2+) is bound by residues K253 and D258. The active site involves K265. Mn(2+) is bound by residues D276, D335, and E337. Residue R339 is part of the active site.

Belongs to the peptidase M17 family. The cofactor is Mn(2+).

It is found in the cytoplasm. It carries out the reaction Release of an N-terminal amino acid, Xaa-|-Yaa-, in which Xaa is preferably Leu, but may be other amino acids including Pro although not Arg or Lys, and Yaa may be Pro. Amino acid amides and methyl esters are also readily hydrolyzed, but rates on arylamides are exceedingly low.. It catalyses the reaction Release of an N-terminal amino acid, preferentially leucine, but not glutamic or aspartic acids.. In terms of biological role, presumably involved in the processing and regular turnover of intracellular proteins. Catalyzes the removal of unsubstituted N-terminal amino acids from various peptides. This Dinoroseobacter shibae (strain DSM 16493 / NCIMB 14021 / DFL 12) protein is Probable cytosol aminopeptidase.